Reading from the N-terminus, the 298-residue chain is Fluorinase (298 aa).

Residues D14, 19-21 (DDS), Y75, S156, D209, N214, 268-269 (SR), and 276-278 (RNA) each bind S-adenosyl-L-methionine.

It belongs to the SAM hydrolase / SAM-dependent halogenase family.

The catalysed reaction is fluoride + S-adenosyl-L-methionine = 5'-deoxy-5'-fluoroadenosine + L-methionine. Its function is as follows. Catalyzes the formation of a C-F bond by combining S-adenosyl-L-methionine (SAM) and fluoride to generate 5'-fluoro-5'-deoxyadenosine (5'-FDA) and L-methionine. The sequence is that of Fluorinase from Actinoplanes sp. (strain N902-109).